The following is a 345-amino-acid chain: Uroporphyrinogen decarboxylase (345 aa).

Substrate is bound by residues 27–31 (RQAGR), Phe46, Asp76, Tyr152, Ser207, and His321.

It belongs to the uroporphyrinogen decarboxylase family. Homodimer.

The protein localises to the cytoplasm. The enzyme catalyses uroporphyrinogen III + 4 H(+) = coproporphyrinogen III + 4 CO2. Its pathway is porphyrin-containing compound metabolism; protoporphyrin-IX biosynthesis; coproporphyrinogen-III from 5-aminolevulinate: step 4/4. Its function is as follows. Catalyzes the decarboxylation of four acetate groups of uroporphyrinogen-III to yield coproporphyrinogen-III. This chain is Uroporphyrinogen decarboxylase, found in Staphylococcus aureus (strain MRSA252).